Here is a 214-residue protein sequence, read N- to C-terminus: uncharacterized protein (214 aa).

The helical transmembrane segment at 10-30 (LLLAGIGGFMVGGLASWVVSS) threads the bilayer. The segment covering 147-157 (SSQANSQSTQP) has biased composition (polar residues). The interval 147-166 (SSQANSQSTQPRDPIPTENF) is disordered.

The protein localises to the membrane. This is an uncharacterized protein from Schizosaccharomyces pombe (strain 972 / ATCC 24843) (Fission yeast).